Reading from the N-terminus, the 629-residue chain is Polygalacturonase non-catalytic subunit AroGP2 (629 aa).

An N-terminal signal peptide occupies residues methionine 1 to alanine 27. The propeptide occupies lysine 28–leucine 109. Asparagine 125, asparagine 143, asparagine 255, asparagine 277, asparagine 333, asparagine 368, and asparagine 386 each carry an N-linked (GlcNAc...) asparagine glycan. Over residues tyrosine 267–lysine 293 the composition is skewed to polar residues. The interval tyrosine 267–threonine 305 is disordered. The BURP domain occupies phenylalanine 414–alanine 628.

As to quaternary structure, interacts with polygalacturonase to form heterodimers.

It localises to the secreted. Its subcellular location is the extracellular space. The protein localises to the apoplast. The protein resides in the cell wall. Functionally, non-catalytic subunit of polygalacturonase. This is Polygalacturonase non-catalytic subunit AroGP2 (GP2) from Solanum lycopersicum (Tomato).